Consider the following 273-residue polypeptide: Phosphate import ATP-binding protein PstB (273 aa).

The interval 1–20 (MTTVSTAAASGPAVPPPRID) is disordered. An ABC transporter domain is found at 27-268 (VAARNLNFYY…PSDRRTQDYI (242 aa)). An ATP-binding site is contributed by 59–66 (GPSGCGKS).

The protein belongs to the ABC transporter superfamily. Phosphate importer (TC 3.A.1.7) family. The complex is composed of two ATP-binding proteins (PstB), two transmembrane proteins (PstC and PstA) and a solute-binding protein (PstS).

Its subcellular location is the cell inner membrane. It carries out the reaction phosphate(out) + ATP + H2O = ADP + 2 phosphate(in) + H(+). Functionally, part of the ABC transporter complex PstSACB involved in phosphate import. Responsible for energy coupling to the transport system. The sequence is that of Phosphate import ATP-binding protein PstB from Nitrobacter winogradskyi (strain ATCC 25391 / DSM 10237 / CIP 104748 / NCIMB 11846 / Nb-255).